Reading from the N-terminus, the 134-residue chain is MMSVGMLSFENVFFIAFSAYLVVILLMTAVSVYYLLKTLRGGDFALPDSELFKKAGKVVGKSFKDRGLTLHDLLWALELRGAVKMDSQSSKYYSTRPLKVNPEHLESYISAFLIAMNIRSDVTVKNESLIISIN.

A helical transmembrane segment spans residues 13–35 (FFIAFSAYLVVILLMTAVSVYYL).

The protein localises to the membrane. This is an uncharacterized protein from Archaeoglobus fulgidus (strain ATCC 49558 / DSM 4304 / JCM 9628 / NBRC 100126 / VC-16).